Reading from the N-terminus, the 343-residue chain is Methionine import ATP-binding protein MetN (343 aa).

In terms of domain architecture, ABC transporter spans 2 to 241 (IKLSNITKVF…PKTPLAQKFI (240 aa)). 38–45 (GASGAGKS) provides a ligand contact to ATP.

Belongs to the ABC transporter superfamily. Methionine importer (TC 3.A.1.24) family. As to quaternary structure, the complex is composed of two ATP-binding proteins (MetN), two transmembrane proteins (MetI) and a solute-binding protein (MetQ).

The protein resides in the cell inner membrane. It catalyses the reaction L-methionine(out) + ATP + H2O = L-methionine(in) + ADP + phosphate + H(+). It carries out the reaction D-methionine(out) + ATP + H2O = D-methionine(in) + ADP + phosphate + H(+). Functionally, part of the ABC transporter complex MetNIQ involved in methionine import. Responsible for energy coupling to the transport system. The sequence is that of Methionine import ATP-binding protein MetN from Shigella flexneri serotype 5b (strain 8401).